We begin with the raw amino-acid sequence, 432 residues long: Adenylosuccinate synthetase (432 aa).

Residues 12–18 and 40–42 each bind GTP; these read GDEGKGK and GHT. The Proton acceptor role is filled by Asp-13. 2 residues coordinate Mg(2+): Asp-13 and Gly-40. IMP is bound by residues 13 to 16, 38 to 41, Thr-132, Arg-146, Gln-226, Thr-241, and Arg-305; these read DEGK and NAGH. Catalysis depends on His-41, which acts as the Proton donor. Substrate is bound at residue 301–307; that stretch reads VVTGRKR. GTP is bound by residues Arg-307, 333-335, and 415-417; these read KLD and STS.

It belongs to the adenylosuccinate synthetase family. In terms of assembly, homodimer. Mg(2+) serves as cofactor.

It is found in the cytoplasm. It carries out the reaction IMP + L-aspartate + GTP = N(6)-(1,2-dicarboxyethyl)-AMP + GDP + phosphate + 2 H(+). Its pathway is purine metabolism; AMP biosynthesis via de novo pathway; AMP from IMP: step 1/2. In terms of biological role, plays an important role in the de novo pathway of purine nucleotide biosynthesis. Catalyzes the first committed step in the biosynthesis of AMP from IMP. The sequence is that of Adenylosuccinate synthetase from Rhizobium etli (strain CIAT 652).